The chain runs to 387 residues: MNLHEYQAKDLLESYGLKVQKGIVAHNPNEAAQAFDQLGGKFAVVKAQVHAGGRGKAGGVKVVKSSQEAREVAESLIGKNLVTFQTDAEGQPVNSVGVFEDVYPVTRELYLGAVVDRSSRKVTFMASTEGGVDIEEVAHNSPEKILKVEVDPLVGLQPFQAREVAFKLGLEGKQINDFVKTMLGAYKAFIECDFALFEINPLAVRENGEIVCVDGKINLDSNALYRHPKLLALRDKSQENAKELKASEHELNYVALEGNIGCMVNGAGLAMATMDIIQLYGGKPANFLDVGGGATKERVIEAFKLILDDENVKAILINIFGGIVRCDMIAEAIIEAVKEVNVTVPVVVRLEGNNAEKGAKILADSGLKLIPADGLADAADKVVKSLG.

Residues 9 to 245 (KDLLESYGLK…KSQENAKELK (237 aa)) enclose the ATP-grasp domain. Residues K46, 53–55 (GRG), E100, Y103, and E108 contribute to the ATP site. Residues N200 and D214 each contribute to the Mg(2+) site. Residues N265 and 322–324 (GIV) contribute to the substrate site.

The protein belongs to the succinate/malate CoA ligase beta subunit family. In terms of assembly, heterotetramer of two alpha and two beta subunits. Mg(2+) is required as a cofactor.

It carries out the reaction succinate + ATP + CoA = succinyl-CoA + ADP + phosphate. The enzyme catalyses GTP + succinate + CoA = succinyl-CoA + GDP + phosphate. It participates in carbohydrate metabolism; tricarboxylic acid cycle; succinate from succinyl-CoA (ligase route): step 1/1. Succinyl-CoA synthetase functions in the citric acid cycle (TCA), coupling the hydrolysis of succinyl-CoA to the synthesis of either ATP or GTP and thus represents the only step of substrate-level phosphorylation in the TCA. The beta subunit provides nucleotide specificity of the enzyme and binds the substrate succinate, while the binding sites for coenzyme A and phosphate are found in the alpha subunit. This is Succinate--CoA ligase [ADP-forming] subunit beta from Francisella tularensis subsp. tularensis (strain FSC 198).